The following is a 191-amino-acid chain: Fe/S biogenesis protein NfuA (191 aa).

2 residues coordinate [4Fe-4S] cluster: Cys-149 and Cys-152.

It belongs to the NfuA family. As to quaternary structure, homodimer. The cofactor is [4Fe-4S] cluster.

Functionally, involved in iron-sulfur cluster biogenesis. Binds a 4Fe-4S cluster, can transfer this cluster to apoproteins, and thereby intervenes in the maturation of Fe/S proteins. Could also act as a scaffold/chaperone for damaged Fe/S proteins. This is Fe/S biogenesis protein NfuA from Klebsiella pneumoniae (strain 342).